Consider the following 286-residue polypeptide: 3-methyl-2-oxobutanoate hydroxymethyltransferase (286 aa).

Residues D51 and D90 each coordinate Mg(2+). 3-methyl-2-oxobutanoate contacts are provided by residues 51-52 (DS), D90, and K120. Mg(2+) is bound at residue E122. E189 serves as the catalytic Proton acceptor. The disordered stretch occupies residues 263–286 (TFPGPSHVFSGSKASSDLNGGDES).

It belongs to the PanB family. In terms of assembly, homodecamer; pentamer of dimers. The cofactor is Mg(2+).

The protein localises to the cytoplasm. The enzyme catalyses 3-methyl-2-oxobutanoate + (6R)-5,10-methylene-5,6,7,8-tetrahydrofolate + H2O = 2-dehydropantoate + (6S)-5,6,7,8-tetrahydrofolate. The protein operates within cofactor biosynthesis; (R)-pantothenate biosynthesis; (R)-pantoate from 3-methyl-2-oxobutanoate: step 1/2. In terms of biological role, catalyzes the reversible reaction in which hydroxymethyl group from 5,10-methylenetetrahydrofolate is transferred onto alpha-ketoisovalerate to form ketopantoate. The chain is 3-methyl-2-oxobutanoate hydroxymethyltransferase from Mesorhizobium japonicum (strain LMG 29417 / CECT 9101 / MAFF 303099) (Mesorhizobium loti (strain MAFF 303099)).